A 687-amino-acid polypeptide reads, in one-letter code: Immune inhibitor A (687 aa).

The segment covering 1–12 (MKDAKADTKEKL) has biased composition (basic and acidic residues). A signal peptide (or 32) is located at residues 1–25 (MKDAKADTKEKLNQPATGTPAATGP). A disordered region spans residues 1–43 (MKDAKADTKEKLNQPATGTPAATGPVKGGLNGKVPTSPAKQKA). A propeptide spanning residues 26–40 (VKGGLNGKVPTSPAK) is cleaved from the precursor. H266 serves as a coordination point for Zn(2+). Residue E267 is part of the active site. A Zn(2+)-binding site is contributed by H270.

Belongs to the peptidase M6 family. The cofactor is Zn(2+). Ca(2+) is required as a cofactor.

The protein localises to the secreted. In terms of biological role, neutral metalloprotease that is secreted to degrade antibacterial proteins produced by the insect host for its defense (attacins and cecropins). Probably degrades some unknown crucial protein(s) too, since it is toxic when injected to insect larvae. The chain is Immune inhibitor A (ina) from Bacillus thuringiensis subsp. alesti.